A 409-amino-acid chain; its full sequence is Argininosuccinate synthase (409 aa).

ATP is bound by residues 12–20 (AYSGGLDTS) and A39. 2 residues coordinate L-citrulline: Y90 and S95. G120 provides a ligand contact to ATP. Positions 122, 126, and 127 each coordinate L-aspartate. Residue N126 coordinates L-citrulline. The L-citrulline site is built by R130, S181, S190, E266, and Y278.

This sequence belongs to the argininosuccinate synthase family. Type 1 subfamily. In terms of assembly, homotetramer.

It localises to the cytoplasm. The enzyme catalyses L-citrulline + L-aspartate + ATP = 2-(N(omega)-L-arginino)succinate + AMP + diphosphate + H(+). Its pathway is amino-acid biosynthesis; L-arginine biosynthesis; L-arginine from L-ornithine and carbamoyl phosphate: step 2/3. The chain is Argininosuccinate synthase from Acidiphilium cryptum (strain JF-5).